We begin with the raw amino-acid sequence, 1097 residues long: Translation initiation factor IF-2 (1097 aa).

The disordered stretch occupies residues leucine 79–alanine 458. Positions alanine 97 to leucine 112 are enriched in basic and acidic residues. A compositionally biased stretch (low complexity) spans alanine 157 to glutamate 173. Basic and acidic residues-rich tracts occupy residues glutamate 174–serine 190 and valine 202–glutamate 221. Residues threonine 224 to alanine 236 show a composition bias toward low complexity. A compositionally biased stretch (polar residues) spans arginine 258–serine 267. The span at glutamate 268–methionine 286 shows a compositional bias: basic and acidic residues. Over residues serine 340–asparagine 363 the composition is skewed to polar residues. Residues histidine 376–asparagine 385 are compositionally biased toward basic residues. The span at proline 402–leucine 443 shows a compositional bias: basic and acidic residues. Residues threonine 591 to lysine 761 enclose the tr-type G domain. The interval glycine 600 to threonine 607 is G1. Glycine 600–threonine 607 lines the GTP pocket. Positions glycine 625–histidine 629 are G2. The tract at residues aspartate 647–glycine 650 is G3. Residues aspartate 647–histidine 651 and asparagine 701–aspartate 704 contribute to the GTP site. Residues asparagine 701–aspartate 704 are G4. The G5 stretch occupies residues serine 737–lysine 739.

Belongs to the TRAFAC class translation factor GTPase superfamily. Classic translation factor GTPase family. IF-2 subfamily.

Its subcellular location is the cytoplasm. Functionally, one of the essential components for the initiation of protein synthesis. Protects formylmethionyl-tRNA from spontaneous hydrolysis and promotes its binding to the 30S ribosomal subunits. Also involved in the hydrolysis of GTP during the formation of the 70S ribosomal complex. The protein is Translation initiation factor IF-2 of Chloroherpeton thalassium (strain ATCC 35110 / GB-78).